Consider the following 276-residue polypeptide: 2-dehydro-3-deoxyphosphooctonate aldolase (276 aa).

This sequence belongs to the KdsA family.

Its subcellular location is the cytoplasm. The enzyme catalyses D-arabinose 5-phosphate + phosphoenolpyruvate + H2O = 3-deoxy-alpha-D-manno-2-octulosonate-8-phosphate + phosphate. It functions in the pathway carbohydrate biosynthesis; 3-deoxy-D-manno-octulosonate biosynthesis; 3-deoxy-D-manno-octulosonate from D-ribulose 5-phosphate: step 2/3. The polypeptide is 2-dehydro-3-deoxyphosphooctonate aldolase (Stenotrophomonas maltophilia (strain K279a)).